The following is a 131-amino-acid chain: D-ribose pyranase (131 aa).

The active-site Proton donor is the H20. Substrate-binding positions include D28, H98, and 120–122; that span reads YSN.

It belongs to the RbsD / FucU family. RbsD subfamily. In terms of assembly, homodecamer.

The protein localises to the cytoplasm. It carries out the reaction beta-D-ribopyranose = beta-D-ribofuranose. It participates in carbohydrate metabolism; D-ribose degradation; D-ribose 5-phosphate from beta-D-ribopyranose: step 1/2. In terms of biological role, catalyzes the interconversion of beta-pyran and beta-furan forms of D-ribose. This Pediococcus pentosaceus (strain ATCC 25745 / CCUG 21536 / LMG 10740 / 183-1w) protein is D-ribose pyranase.